We begin with the raw amino-acid sequence, 81 residues long: MSHSVKIYDTCIGCTQCVRACPTDVLEMVPWGGCKAAQIASAPRTEDCVGCKRCESACPTDFLSVRVYLGAETTRSMGLAY.

4Fe-4S ferredoxin-type domains follow at residues 2-31 (SHSVKIYDTCIGCTQCVRACPTDVLEMVPW) and 39-68 (IASAPRTEDCVGCKRCESACPTDFLSVRVY). Residues Cys11, Cys14, Cys17, Cys21, Cys48, Cys51, Cys54, and Cys58 each coordinate [4Fe-4S] cluster.

The eukaryotic PSI reaction center is composed of at least 11 subunits. Requires [4Fe-4S] cluster as cofactor.

Its subcellular location is the plastid. It localises to the chloroplast thylakoid membrane. The catalysed reaction is reduced [plastocyanin] + hnu + oxidized [2Fe-2S]-[ferredoxin] = oxidized [plastocyanin] + reduced [2Fe-2S]-[ferredoxin]. Functionally, apoprotein for the two 4Fe-4S centers FA and FB of photosystem I (PSI); essential for photochemical activity. FB is the terminal electron acceptor of PSI, donating electrons to ferredoxin. The C-terminus interacts with PsaA/B/D and helps assemble the protein into the PSI complex. Required for binding of PsaD and PsaE to PSI. PSI is a plastocyanin/cytochrome c6-ferredoxin oxidoreductase, converting photonic excitation into a charge separation, which transfers an electron from the donor P700 chlorophyll pair to the spectroscopically characterized acceptors A0, A1, FX, FA and FB in turn. This chain is Photosystem I iron-sulfur center, found in Nephroselmis olivacea (Green alga).